The chain runs to 3001 residues: BEACH domain-containing protein C2 (3001 aa).

Disordered stretches follow at residues 43 to 80 (DFEQVSLGDQEKAANESQGDLQEPGSFSNSDHGRSSFG), 103 to 156 (DVQS…KATV), 1018 to 1076 (NVLA…NVGS), 1846 to 1868 (TFSSFQKPLEPPNNNAPPRPRDK), 2039 to 2071 (YSGTDHHGAAADYDDQTETKSDNGSKGSQSNPP), 2101 to 2132 (AEEHKRDEGRISGSHEHASRTSAGNSDPRTSN), and 2193 to 2212 (NLADHSDESQSGDQEKDRSW). S48 is modified (phosphoserine). Polar residues-rich tracts occupy residues 57–72 (NESQGDLQEPGSFSNS), 121–132 (SMQQSLSETSLD), and 1037–1050 (SPYNESGSVKQLDS). Residues 1854 to 1863 (LEPPNNNAPP) are compositionally biased toward pro residues. A compositionally biased stretch (basic and acidic residues) spans 2101–2119 (AEEHKRDEGRISGSHEHAS). The span at 2120–2129 (RTSAGNSDPR) shows a compositional bias: polar residues. The 110-residue stretch at 2151-2260 (ELDERILLEL…GRRNAYRAIV (110 aa)) folds into the BEACH-type PH domain. Positions 2196–2211 (DHSDESQSGDQEKDRS) are enriched in basic and acidic residues. Residues 2275–2564 (QRPEQLLRRT…QLLTVPHMKR (290 aa)) form the BEACH domain. 5 WD repeats span residues 2679–2718 (SGIRSSSVIAITSDGEIITGGHADNSIKLVSSDGAKTLET), 2721–2760 (GHCAPVTCLALSPDNNFLVTGSRDSTVLLWRIHKAFTSRT), 2802–2841 (GHRRELVCCCVSSDQGVVVSSSESSDVLLHSIRKGRLIRR), 2842–2881 (LVGVKADSLCISSDGVIMAWSSSEGSISVFTINGVLIAKA), and 2953–2992 (GQGQDITALALNVDNTNLLVSTEDKQLIIFTDPALSLKVV).

The sequence is that of BEACH domain-containing protein C2 from Arabidopsis thaliana (Mouse-ear cress).